We begin with the raw amino-acid sequence, 212 residues long: MQLTQVLAVAILAAGVSAGHRPHRPHSNKLEIQDIKCQSGAPYCCSPDKTKGSTCTKLTGSSVNCDSVVVCCNNNGDKHSPQTCSASVAHPITFVDVDAKFRIDHNKVSHNRVNAKQRRDDKKDYGKNDYGKKDYGKKDYGKKDYGKKEYDPKDHKDYDHKDYDHKDYGHKDYGHKDYGHKDYGHKDYGHDDYGYKGYDDKDYGYKGYDDYY.

The first 18 residues, 1-18 (MQLTQVLAVAILAAGVSA), serve as a signal peptide directing secretion. The interval 108–180 (VSHNRVNAKQ…KDYGHKDYGH (73 aa)) is disordered. Residues 117 to 180 (QRRDDKKDYG…KDYGHKDYGH (64 aa)) show a composition bias toward basic and acidic residues. The 15 X 5 AA tandem repeats of K-D-Y-G-H stretch occupies residues 120–210 (DDKKDYGKND…KDYGYKGYDD (91 aa)). Residues 123–127 (KDYGK) form repeat 1. Residues 128–132 (NDYGK) form a 2; truncated repeat. Repeat copies occupy residues 133-137 (KDYGK), 138-142 (KDYGK), and 143-147 (KDYGK). Residues 148 to 152 (KEYDP) form a 6; truncated repeat. Repeat copies occupy residues 166-170 (KDYGH), 171-175 (KDYGH), 176-180 (KDYGH), 181-185 (KDYGH), and 186-190 (KDYGH). Residues 191 to 195 (DDYGY) form a 12; truncated repeat. A 13; truncated repeat occupies 196–200 (KGYDD). One copy of the 14; truncated repeat lies at 201–205 (KDYGY). Residues 206 to 210 (KGYDD) form a 15; truncated repeat.

It localises to the secreted. This is an uncharacterized protein from Arthroderma benhamiae (strain ATCC MYA-4681 / CBS 112371) (Trichophyton mentagrophytes).